The sequence spans 416 residues: MANDLFNSFMSGPDEQGRFGIFGGRFVSETLMPLILSLEEEYEKAKTDPSFWAEMDDLWTNYVGRPSPLYFAERLTEHLGGAKVYMKRDELNHTGAHKINNVLGQIILARRMGKTRIIAETGAGQHGVATATVCAKFGLKCVVYMGAHDVRRQAPNVFRMRLLGAEVIPVTSGRGTLKDAMNDALRDWVTNVRDTFYCIGTVAGPHPYPAMVRDFQSIIGKEAKEQMMKAEGRLPDTIIAAIGGGSNAMGLFYPFLDDTSVNIIGVEAGGKGVNEKMEHCASLTGGRPGVLHGNRTYLLQDDDGQILEGYSISAGLDYPGIGPEHSWLHEVGRAKYVSITDMEALEAFKLCCATEGIIPALEPSHALAHVMKLAPELPKDHIIIMNMCGRGDKDIFTVAKFLGFDMSDTEGRDAED.

N6-(pyridoxal phosphate)lysine is present on lysine 98.

Belongs to the TrpB family. In terms of assembly, tetramer of two alpha and two beta chains. Requires pyridoxal 5'-phosphate as cofactor.

It catalyses the reaction (1S,2R)-1-C-(indol-3-yl)glycerol 3-phosphate + L-serine = D-glyceraldehyde 3-phosphate + L-tryptophan + H2O. It participates in amino-acid biosynthesis; L-tryptophan biosynthesis; L-tryptophan from chorismate: step 5/5. In terms of biological role, the beta subunit is responsible for the synthesis of L-tryptophan from indole and L-serine. The protein is Tryptophan synthase beta chain of Ruegeria pomeroyi (strain ATCC 700808 / DSM 15171 / DSS-3) (Silicibacter pomeroyi).